The primary structure comprises 331 residues: Putative peptidyl-prolyl cis-trans isomerase RC0542 (331 aa).

The tract at residues 33-54 (EQTASNNSSTDENQTSINNEPP) is disordered. Residues 128-226 (GHVVTVFYQI…SNEVKIYDDE (99 aa)) enclose the PPIase FKBP-type domain.

The enzyme catalyses [protein]-peptidylproline (omega=180) = [protein]-peptidylproline (omega=0). The polypeptide is Putative peptidyl-prolyl cis-trans isomerase RC0542 (Rickettsia conorii (strain ATCC VR-613 / Malish 7)).